The primary structure comprises 55 residues: Large ribosomal subunit protein bL33 (55 aa).

This sequence belongs to the bacterial ribosomal protein bL33 family.

The chain is Large ribosomal subunit protein bL33 from Phenylobacterium zucineum (strain HLK1).